We begin with the raw amino-acid sequence, 313 residues long: Ornithine carbamoyltransferase (313 aa).

Carbamoyl phosphate-binding positions include 57 to 60 (STRT), Q84, R108, and 135 to 138 (HPTQ). Residues N167, D231, and 235–236 (SM) contribute to the L-ornithine site. Residues 272–273 (CL) and R300 contribute to the carbamoyl phosphate site.

Belongs to the aspartate/ornithine carbamoyltransferase superfamily. OTCase family.

The protein resides in the cytoplasm. The enzyme catalyses carbamoyl phosphate + L-ornithine = L-citrulline + phosphate + H(+). The protein operates within amino-acid biosynthesis; L-arginine biosynthesis; L-arginine from L-ornithine and carbamoyl phosphate: step 1/3. Its function is as follows. Reversibly catalyzes the transfer of the carbamoyl group from carbamoyl phosphate (CP) to the N(epsilon) atom of ornithine (ORN) to produce L-citrulline. In Caldanaerobacter subterraneus subsp. tengcongensis (strain DSM 15242 / JCM 11007 / NBRC 100824 / MB4) (Thermoanaerobacter tengcongensis), this protein is Ornithine carbamoyltransferase.